The sequence spans 398 residues: Phosphoglycerate kinase (398 aa).

Substrate is bound by residues 23-25, Arg38, 61-64, Arg122, and Arg155; these read DFN and HMGK. Residues Lys206, Gly297, Glu328, and 354–357 contribute to the ATP site; that span reads GGDS.

The protein belongs to the phosphoglycerate kinase family. In terms of assembly, monomer.

It localises to the cytoplasm. It catalyses the reaction (2R)-3-phosphoglycerate + ATP = (2R)-3-phospho-glyceroyl phosphate + ADP. It functions in the pathway carbohydrate degradation; glycolysis; pyruvate from D-glyceraldehyde 3-phosphate: step 2/5. The polypeptide is Phosphoglycerate kinase (Clostridium botulinum (strain Hall / ATCC 3502 / NCTC 13319 / Type A)).